Consider the following 167-residue polypeptide: NAD(P)H-quinone oxidoreductase subunit I, chloroplastic (167 aa).

2 4Fe-4S ferredoxin-type domains span residues 55 to 84 (GRIHFEFDKCIACEVCVRVCPIDLPVVDWK) and 95 to 124 (LNYSIDFGICIFCGNCVEYCPTNCLSMTEE). [4Fe-4S] cluster contacts are provided by Cys-64, Cys-67, Cys-70, Cys-74, Cys-104, Cys-107, Cys-110, and Cys-114.

This sequence belongs to the complex I 23 kDa subunit family. NDH is composed of at least 16 different subunits, 5 of which are encoded in the nucleus. It depends on [4Fe-4S] cluster as a cofactor.

The protein localises to the plastid. It is found in the chloroplast thylakoid membrane. The enzyme catalyses a plastoquinone + NADH + (n+1) H(+)(in) = a plastoquinol + NAD(+) + n H(+)(out). It catalyses the reaction a plastoquinone + NADPH + (n+1) H(+)(in) = a plastoquinol + NADP(+) + n H(+)(out). Its function is as follows. NDH shuttles electrons from NAD(P)H:plastoquinone, via FMN and iron-sulfur (Fe-S) centers, to quinones in the photosynthetic chain and possibly in a chloroplast respiratory chain. The immediate electron acceptor for the enzyme in this species is believed to be plastoquinone. Couples the redox reaction to proton translocation, and thus conserves the redox energy in a proton gradient. The polypeptide is NAD(P)H-quinone oxidoreductase subunit I, chloroplastic (Aethionema grandiflorum (Persian stone-cress)).